Reading from the N-terminus, the 161-residue chain is Peripheral myelin protein 22 (161 aa).

Methionine 1 is a topological domain (cytoplasmic). A helical transmembrane segment spans residues 2 to 31 (LLLLLGILFLHIAVLVLLFVSTIVSQWLVG). Residues 32 to 64 (NGHTTDLWQNCTTSALGAVQHCYSSSVSEWLQS) are Extracellular-facing. N-linked (GlcNAc...) asparagine glycosylation occurs at asparagine 41. A helical membrane pass occupies residues 65 to 91 (VQATMILSVIFSVLALFLFFCQLFTLT). The Cytoplasmic portion of the chain corresponds to 92–95 (KGGR). Residues 96–119 (FYITGFFQILAGLCVMSAAAIYTV) traverse the membrane as a helical segment. Residues 120–133 (RHSEWHVNTDYSYG) are Extracellular-facing. Residues 134–156 (FAYILAWVAFPLALLSGIIYVIL) form a helical membrane-spanning segment. The Cytoplasmic portion of the chain corresponds to 157 to 160 (RKRE).

This sequence belongs to the PMP-22/EMP/MP20 family. Ubiquitinated by the DCX(DCAF13) E3 ubiquitin ligase complex, leading to its degradation. In terms of tissue distribution, schwann cells of the peripheral nervous system. Expressed at growth arrest of mammalian fibroblasts.

Its subcellular location is the cell membrane. Functionally, might be involved in growth regulation, and in myelinization in the peripheral nervous system. The chain is Peripheral myelin protein 22 (Pmp22) from Mus musculus (Mouse).